We begin with the raw amino-acid sequence, 673 residues long: Polygalacturonate 4-alpha-galacturonosyltransferase (673 aa).

The Cytoplasmic segment spans residues Met-1–Ser-22. The helical; Signal-anchor for type II membrane protein transmembrane segment at Val-23–Gly-43 threads the bilayer. The Lumenal portion of the chain corresponds to Val-44 to Glu-673. A glycan (N-linked (GlcNAc...) asparagine) is linked at Asn-103. The tract at residues Gly-112–Lys-136 is disordered. N-linked (GlcNAc...) asparagine glycans are attached at residues Asn-382, Asn-434, Asn-538, and Asn-585.

Belongs to the glycosyltransferase 8 family. As to expression, expressed in seedlings, inflorescences, flowers, siliques, pollen, roots, stems and leaves.

The protein resides in the golgi apparatus membrane. It carries out the reaction [(1-&gt;4)-alpha-D-galacturonosyl](n) + UDP-alpha-D-galacturonate = [(1-&gt;4)-alpha-D-galacturonosyl](n+1) + UDP + H(+). It functions in the pathway glycan metabolism; pectin biosynthesis. Functionally, involved in pectin biosynthesis. Catalyzes the transfer of galacturonic acid from uridine 5'-diphosphogalacturonic acid onto the pectic polysaccharide homogalacturonan. This Arabidopsis thaliana (Mouse-ear cress) protein is Polygalacturonate 4-alpha-galacturonosyltransferase (GAUT1).